Consider the following 762-residue polypeptide: Polymeric immunoglobulin receptor (762 aa).

An N-terminal signal peptide occupies residues Met-1–Met-18. The Ig-like V-type 1; required for binding to polymeric IgA and IgM domain maps to Lys-19–Ser-120. The Extracellular portion of the chain corresponds to Lys-19 to Lys-636. Disulfide bonds link Cys-40–Cys-110 and Cys-56–Cys-64. N-linked (GlcNAc...) asparagine glycosylation is found at Asn-83 and Asn-135. 4 Ig-like V-type domains span residues Gly-145–Val-238, Gly-251–Phe-351, Gly-363–Val-460, and Pro-464–Ala-563. 8 disulfide bridges follow: Cys-152–Cys-221, Cys-258–Cys-324, Cys-272–Cys-280, Cys-370–Cys-443, Cys-384–Cys-394, Cys-484–Cys-546, Cys-488–Cys-522, and Cys-498–Cys-505. An N-linked (GlcNAc...) asparagine glycan is attached at Asn-291. Asn-423 is a glycosylation site (N-linked (GlcNAc...) asparagine). N-linked (GlcNAc...) asparagine glycosylation occurs at Asn-530. The tract at residues Phe-604–Ser-634 is disordered. Residues Val-637–Leu-659 form a helical membrane-spanning segment. The Cytoplasmic segment spans residues Arg-660–Ala-762.

As to quaternary structure, interacts (mainly via CDR1-like domain) with dimeric IgA. Interacts (mainly via CDR2-like domain) with pentameric IgM. Either free or part of the secretory IgA (sIgA) complex that consists of two, four or five IgA monomers, and two additional non-Ig polypeptides, namely the JCHAIN and the secretory component (the proteolytic product of PIGR). Free secretory component interacts with bacterial antigens toxA of C.difficile and eae of E.coli. N-glycosylated. Carries predominantly biantennary complex type glycans which are largely non-fucosylated. Sialylation with NeuAc is common, except for Asn-291 which carries exclusively high mannose glycans. N-glycans attached to Asn-83: Gal2GlcNAc2Man3GlcNAc2; Gal2GlcNAc2Man3GlcNAc2(Fuc); Gal1GlcNAc1Man4GlcNAc2(Fuc); Gal1GlcNAc1Man3GlcNAc2; Gal1GlcNAc1Man4GlcNAc2 and NeuAc1Gal2GlcNAc2Man3GlcNAc2. N-glycans attached to Asn-135: Gal2GlcNAc2Man3GlcNAc2; Gal1GlcNAc1Man3GlcNAc2 and NeuAc1Gal2GlcNAc2Man3GlcNAc2. N-glycans attached to Asn-291: Man5-8GlcNAc2. N-glycans attached to Asn-423: NeuAc1Gal2GlcNAc2Man3GlcNAc2. N-glycans attached to Asn-530: Gal2GlcNAc2Man3GlcNAc2; Gal1GlcNAc1Man3GlcNAc2 and NeuAc1Gal2GlcNAc2Man3GlcNAc2. N-glycosylation is required for anchoring IgA molecules to mucus but is not necessary for Ig binding.

It is found in the cell membrane. It localises to the secreted. Its function is as follows. Mediates selective transcytosis of polymeric IgA and IgM across mucosal epithelial cells. Binds polymeric IgA and IgM at the basolateral surface of epithelial cells. The complex is then transported across the cell to be secreted at the apical surface. During this process, a cleavage occurs that separates the extracellular (known as the secretory component) from the transmembrane segment. Through its N-linked glycans ensures anchoring of secretory IgA (sIgA) molecules to mucus lining the epithelial surface to neutralize extracellular pathogens. On its own (free form) may act as a non-specific microbial scavenger to prevent pathogen interaction with epithelial cells. The chain is Polymeric immunoglobulin receptor (PIGR) from Equus asinus (Donkey).